The primary structure comprises 102 residues: Small ribosomal subunit protein uS10 (102 aa).

The protein belongs to the universal ribosomal protein uS10 family. As to quaternary structure, part of the 30S ribosomal subunit.

Functionally, involved in the binding of tRNA to the ribosomes. The sequence is that of Small ribosomal subunit protein uS10 from Oceanobacillus iheyensis (strain DSM 14371 / CIP 107618 / JCM 11309 / KCTC 3954 / HTE831).